A 373-amino-acid polypeptide reads, in one-letter code: Dual-specificity RNA methyltransferase RlmN (373 aa).

Glu94 (proton acceptor) is an active-site residue. Positions 100–339 (EDDRATLCVS…VIVRKTRGDD (240 aa)) constitute a Radical SAM core domain. The cysteines at positions 107 and 344 are disulfide-linked. Positions 114, 118, and 121 each coordinate [4Fe-4S] cluster. Residues 168–169 (GE), Ser200, 222–224 (SIH), and Asn301 contribute to the S-adenosyl-L-methionine site. The active-site S-methylcysteine intermediate is Cys344.

The protein belongs to the radical SAM superfamily. RlmN family. It depends on [4Fe-4S] cluster as a cofactor.

The protein localises to the cytoplasm. It carries out the reaction adenosine(2503) in 23S rRNA + 2 reduced [2Fe-2S]-[ferredoxin] + 2 S-adenosyl-L-methionine = 2-methyladenosine(2503) in 23S rRNA + 5'-deoxyadenosine + L-methionine + 2 oxidized [2Fe-2S]-[ferredoxin] + S-adenosyl-L-homocysteine. It catalyses the reaction adenosine(37) in tRNA + 2 reduced [2Fe-2S]-[ferredoxin] + 2 S-adenosyl-L-methionine = 2-methyladenosine(37) in tRNA + 5'-deoxyadenosine + L-methionine + 2 oxidized [2Fe-2S]-[ferredoxin] + S-adenosyl-L-homocysteine. In terms of biological role, specifically methylates position 2 of adenine 2503 in 23S rRNA and position 2 of adenine 37 in tRNAs. m2A2503 modification seems to play a crucial role in the proofreading step occurring at the peptidyl transferase center and thus would serve to optimize ribosomal fidelity. The polypeptide is Dual-specificity RNA methyltransferase RlmN (Shewanella baltica (strain OS185)).